The sequence spans 238 residues: Ribitol-5-phosphate cytidylyltransferase 2 (238 aa).

CTP-binding positions include 7–10 (LAGG) and 81–87 (GTDRNET).

Belongs to the IspD/TarI cytidylyltransferase family. TarI subfamily.

It carries out the reaction D-ribitol 5-phosphate + CTP + H(+) = CDP-L-ribitol + diphosphate. Its pathway is cell wall biogenesis; poly(ribitol phosphate) teichoic acid biosynthesis. Its function is as follows. Catalyzes the transfer of the cytidylyl group of CTP to D-ribitol 5-phosphate. The protein is Ribitol-5-phosphate cytidylyltransferase 2 of Staphylococcus aureus (strain MRSA252).